The following is a 292-amino-acid chain: Medium chain reductase/dehydrogenase ucsI (292 aa).

C43 is a binding site for Zn(2+). Residue Y49 coordinates substrate. 2 residues coordinate Zn(2+): H65 and E66. NAD(+) is bound by residues 184-189 (GCGPVG), D208, R213, and 276-278 (IGA).

This sequence belongs to the zinc-containing alcohol dehydrogenase family. It depends on Zn(2+) as a cofactor.

The protein operates within mycotoxin biosynthesis. Medium chain reductase/dehydrogenase; part of the gene cluster that mediates the biosynthesis of UCS1025A, a member of the pyrrolizidinone family that acts as a strong telomerase inhibitor and displays potent antibacterial and antitumor properties. These compounds share a hemiaminal-containing pyrrolizidinone core fused with a gamma-lactone, giving a furopyrrolizidine that is connected to a decalin fragment. The polyketide synthase module (PKS) of the PKS-NRPS ucsA is responsible for the synthesis of the polyketide backbone via the condensation of an acetyl-CoA starter unit with 6 malonyl-CoA units. The downstream nonribosomal peptide synthetase (NRPS) module then amidates the carboxyl end of the polyketide with a 2S,3S-methylproline derived from L-isoleucine by the 2-oxoglutarate-dependent dioxygenase ucsF which converts L-isoleucine to (4S,5S)-4-methylpyrroline-5-carboxylate that is further converted to 2S,3S-methylproline by the pyrroline-5-carboxylate reductase ucsG. Reductive release of the completed aminoacyl polyketide from the assembly line can form the 3-pyrrolin-2-one structure via an intramolecular Knoevenagel reaction. Because ucsA lacks a designated enoylreductase (ER) domain, the required activity is provided the enoyl reductase ucsL. This keto acyclic precursor is the substrate of the Diels-Alderase ucsH, that catalyzes the Diels-Alder cycloaddition. Oxidation of the 3S-methyl group to a carboxylate by the cytochrome P450 monooxygenase ucsK allows an oxa-Michael cyclization that might involve the reductase/dehydrogenase ucsI and which furnishes the furopyrrolizidine. The oxidase ucsJ likely plays a critical role in stereoselective reduction of the C5-C6 double bond to afford the required R-configured carboxylate group. Further enolization and oxidation at C5 by an unidentified enzyme affords the last intermediate that can undergo oxa-Michael cyclization to yield UCS1025A. This Acremonium sp protein is Medium chain reductase/dehydrogenase ucsI.